The following is a 300-amino-acid chain: Ribonuclease HIII (300 aa).

Residues 83-300 (IPIIGSDEVG…THKAQALLTK (218 aa)) form the RNase H type-2 domain. Residues aspartate 89, glutamate 90, and aspartate 194 each coordinate a divalent metal cation.

Belongs to the RNase HII family. RnhC subfamily. Mn(2+) is required as a cofactor. Requires Mg(2+) as cofactor.

It is found in the cytoplasm. It carries out the reaction Endonucleolytic cleavage to 5'-phosphomonoester.. Its function is as follows. Endonuclease that specifically degrades the RNA of RNA-DNA hybrids. This is Ribonuclease HIII from Streptococcus pyogenes serotype M49 (strain NZ131).